The chain runs to 221 residues: Probable glutathione S-transferase parC (221 aa).

The region spanning 4 to 83 (EEVILLDFWP…YIEEVWKDKA (80 aa)) is the GST N-terminal domain. Glutathione is bound by residues Ser-14, Lys-41, Ile-55, and 67–68 (ES). Residues 90 to 214 (DPYDRAQARF…PKVLEFVKVL (125 aa)) enclose the GST C-terminal domain.

It belongs to the GST superfamily. Phi family. As to expression, abundant in seedlings and roots. It is also found in the shoot tips, flowers and leaves.

It catalyses the reaction RX + glutathione = an S-substituted glutathione + a halide anion + H(+). Functionally, conjugation of reduced glutathione to a wide number of exogenous and endogenous hydrophobic electrophiles. The protein is Probable glutathione S-transferase parC (PARC) of Nicotiana tabacum (Common tobacco).